Consider the following 368-residue polypeptide: Phosphoserine aminotransferase (368 aa).

An L-glutamate-binding site is contributed by Arg-44. Pyridoxal 5'-phosphate is bound by residues 78 to 79 (AT), Trp-104, Thr-157, Asp-179, and Gln-202. An N6-(pyridoxal phosphate)lysine modification is found at Lys-203. 244–245 (NT) lines the pyridoxal 5'-phosphate pocket.

It belongs to the class-V pyridoxal-phosphate-dependent aminotransferase family. SerC subfamily. As to quaternary structure, homodimer. Requires pyridoxal 5'-phosphate as cofactor.

The protein localises to the cytoplasm. The catalysed reaction is O-phospho-L-serine + 2-oxoglutarate = 3-phosphooxypyruvate + L-glutamate. It carries out the reaction 4-(phosphooxy)-L-threonine + 2-oxoglutarate = (R)-3-hydroxy-2-oxo-4-phosphooxybutanoate + L-glutamate. The protein operates within amino-acid biosynthesis; L-serine biosynthesis; L-serine from 3-phospho-D-glycerate: step 2/3. Its pathway is cofactor biosynthesis; pyridoxine 5'-phosphate biosynthesis; pyridoxine 5'-phosphate from D-erythrose 4-phosphate: step 3/5. Functionally, catalyzes the reversible conversion of 3-phosphohydroxypyruvate to phosphoserine and of 3-hydroxy-2-oxo-4-phosphonooxybutanoate to phosphohydroxythreonine. This is Phosphoserine aminotransferase from Neisseria gonorrhoeae (strain ATCC 700825 / FA 1090).